The primary structure comprises 882 residues: Valine--tRNA ligase (882 aa).

Residues 50-60 (PNVTGKLHLGH) carry the 'HIGH' region motif. A 'KMSKS' region motif is present at residues 526-530 (KMSKS). Lysine 529 contacts ATP. A coiled-coil region spans residues 810-881 (LEALIDLDLE…VLERIETLKE (72 aa)).

The protein belongs to the class-I aminoacyl-tRNA synthetase family. ValS type 1 subfamily. As to quaternary structure, monomer.

The protein localises to the cytoplasm. The catalysed reaction is tRNA(Val) + L-valine + ATP = L-valyl-tRNA(Val) + AMP + diphosphate. Its function is as follows. Catalyzes the attachment of valine to tRNA(Val). As ValRS can inadvertently accommodate and process structurally similar amino acids such as threonine, to avoid such errors, it has a 'posttransfer' editing activity that hydrolyzes mischarged Thr-tRNA(Val) in a tRNA-dependent manner. The protein is Valine--tRNA ligase of Listeria innocua serovar 6a (strain ATCC BAA-680 / CLIP 11262).